A 74-amino-acid polypeptide reads, in one-letter code: UPF0248 protein MK0350 (74 aa).

It belongs to the UPF0248 family.

The sequence is that of UPF0248 protein MK0350 from Methanopyrus kandleri (strain AV19 / DSM 6324 / JCM 9639 / NBRC 100938).